The chain runs to 60 residues: Sperm protamine P1 (60 aa).

A disordered region spans residues 1-60 (MARYRHSRSRSRSRYRRRRRRRSRYRSQRRRYRGRRRRRSRRGRRRGYSRRRYSRRRRRY).

The protein belongs to the protamine P1 family. Testis.

Its subcellular location is the nucleus. The protein localises to the chromosome. Its function is as follows. Protamines substitute for histones in the chromatin of sperm during the haploid phase of spermatogenesis. They compact sperm DNA into a highly condensed, stable and inactive complex. In Osphranter rufus (Red kangaroo), this protein is Sperm protamine P1 (PRM1).